Consider the following 224-residue polypeptide: ATP-dependent dethiobiotin synthetase BioD (224 aa).

12–17 (GVGKTF) is a binding site for ATP. Thr-16 lines the Mg(2+) pocket. Lys-37 is a catalytic residue. Substrate is bound at residue Thr-41. ATP is bound by residues Asn-52, 107–110 (EGAG), 167–168 (GS), 197–199 (PEG), and Glu-204. Residues Asn-52 and Glu-107 each coordinate Mg(2+).

The protein belongs to the dethiobiotin synthetase family. Homodimer. Mg(2+) is required as a cofactor.

The protein resides in the cytoplasm. It catalyses the reaction (7R,8S)-7,8-diammoniononanoate + CO2 + ATP = (4R,5S)-dethiobiotin + ADP + phosphate + 3 H(+). It functions in the pathway cofactor biosynthesis; biotin biosynthesis; biotin from 7,8-diaminononanoate: step 1/2. Its function is as follows. Catalyzes a mechanistically unusual reaction, the ATP-dependent insertion of CO2 between the N7 and N8 nitrogen atoms of 7,8-diaminopelargonic acid (DAPA, also called 7,8-diammoniononanoate) to form a ureido ring. This Corynebacterium glutamicum (strain ATCC 13032 / DSM 20300 / JCM 1318 / BCRC 11384 / CCUG 27702 / LMG 3730 / NBRC 12168 / NCIMB 10025 / NRRL B-2784 / 534) protein is ATP-dependent dethiobiotin synthetase BioD.